Reading from the N-terminus, the 379-residue chain is Inactive deoxyhypusine synthase (379 aa).

The tract at residues 1 to 48 is disordered; it reads MLASVPAPRPAKKDSAASRRKSASKSTGAAVKDGSSARVSASGAAESP. The span at 36–47 shows a compositional bias: low complexity; sequence SARVSASGAAES. NAD(+) is bound by residues 115-119, 141-143, E147, and D256; these read SNMIS and SAG. Residue 146–147 coordinates spermidine; sequence EE. Position 261 (D261) interacts with spermidine. G302 is an NAD(+) binding site. Position 307 (H307) interacts with spermidine. 323–324 lines the NAD(+) pocket; sequence TG. Spermidine-binding positions include 329–331 and 338–344; these read GCV and DDVACGL. Residue 357-358 participates in NAD(+) binding; sequence DA.

The protein belongs to the deoxyhypusine synthase family.

This Leishmania donovani protein is Inactive deoxyhypusine synthase.